A 339-amino-acid chain; its full sequence is Glucokinase (339 aa).

Residue 16–21 (GDIGGT) participates in ATP binding.

The protein belongs to the bacterial glucokinase family.

The protein resides in the cytoplasm. The catalysed reaction is D-glucose + ATP = D-glucose 6-phosphate + ADP + H(+). The sequence is that of Glucokinase from Sinorhizobium medicae (strain WSM419) (Ensifer medicae).